The following is a 775-amino-acid chain: Suppressor of glycerol defect protein 1 (775 aa).

Composition is skewed to basic residues over residues 1–11 (MRPIKKSRSLK) and 28–49 (RRGK…RISR). Disordered stretches follow at residues 1–101 (MRPI…LLDP) and 152–253 (IDDI…GGDK). Basic and acidic residues-rich tracts occupy residues 52-79 (NGYE…DAHR), 177-193 (TGDH…REGN), and 209-223 (DEFH…RMDP). An MIF4G domain is found at 262–463 (RRKLQGSLNK…ESITNLKENK (202 aa)). Positions 565–689 (TLRTSIFVAL…PLTILKHVDF (125 aa)) constitute an MI domain.

The protein belongs to the CWC22 family.

Its subcellular location is the nucleus. It localises to the nucleolus. Functionally, involved in osmoregulatory glycerol response. The polypeptide is Suppressor of glycerol defect protein 1 (sgd1) (Schizosaccharomyces pombe (strain 972 / ATCC 24843) (Fission yeast)).